The following is a 308-amino-acid chain: MGEGGAQRPLLTVIAGPTASGKTALAIALAQRAGGEIVSADSQQVYRHFDIGTAKPSSEELAAVPHHLVSAVDPMEAFSAVEYQRRADAVIAEIAARGRPVFVVGGTGLYLRVLLHGVLEAPGALPELRAELEALAAGEGREAVHRRLAEVDPETAAKLPPQDLVRVIRALEIHAQTGVPASAFRKAHAFAPDRYPFQLYVLSPPRDVLYGLINTRTRMLFERGLVEETRELLARGYADSAPMRSVGYVQARAVVEGRMTREEAIHDTAQETRRYAKRQLTWFRKEPGAVFLAPPYEAALPLGGCCSP.

16 to 23 (GPTASGKT) provides a ligand contact to ATP. A substrate-binding site is contributed by 18–23 (TASGKT). The segment at 41–44 (DSQQ) is interaction with substrate tRNA.

This sequence belongs to the IPP transferase family. In terms of assembly, monomer. It depends on Mg(2+) as a cofactor.

The enzyme catalyses adenosine(37) in tRNA + dimethylallyl diphosphate = N(6)-dimethylallyladenosine(37) in tRNA + diphosphate. Its function is as follows. Catalyzes the transfer of a dimethylallyl group onto the adenine at position 37 in tRNAs that read codons beginning with uridine, leading to the formation of N6-(dimethylallyl)adenosine (i(6)A). The sequence is that of tRNA dimethylallyltransferase from Myxococcus xanthus (strain DK1622).